The chain runs to 188 residues: UPF0301 protein ABO_0112 (188 aa).

The protein belongs to the UPF0301 (AlgH) family.

The sequence is that of UPF0301 protein ABO_0112 from Alcanivorax borkumensis (strain ATCC 700651 / DSM 11573 / NCIMB 13689 / SK2).